Consider the following 158-residue polypeptide: NADPH-dependent 7-cyano-7-deazaguanine reductase (158 aa).

Cysteine 56 serves as the catalytic Thioimide intermediate. Aspartate 63 (proton donor) is an active-site residue. Residues 78–80 (LES) and 97–98 (HE) contribute to the substrate site.

This sequence belongs to the GTP cyclohydrolase I family. QueF type 1 subfamily.

It localises to the cytoplasm. The enzyme catalyses 7-aminomethyl-7-carbaguanine + 2 NADP(+) = 7-cyano-7-deazaguanine + 2 NADPH + 3 H(+). Its pathway is tRNA modification; tRNA-queuosine biosynthesis. In terms of biological role, catalyzes the NADPH-dependent reduction of 7-cyano-7-deazaguanine (preQ0) to 7-aminomethyl-7-deazaguanine (preQ1). This Nitrobacter winogradskyi (strain ATCC 25391 / DSM 10237 / CIP 104748 / NCIMB 11846 / Nb-255) protein is NADPH-dependent 7-cyano-7-deazaguanine reductase.